A 561-amino-acid chain; its full sequence is Proline--tRNA ligase (561 aa).

It belongs to the class-II aminoacyl-tRNA synthetase family. ProS type 1 subfamily. As to quaternary structure, homodimer.

The protein resides in the cytoplasm. It carries out the reaction tRNA(Pro) + L-proline + ATP = L-prolyl-tRNA(Pro) + AMP + diphosphate. Functionally, catalyzes the attachment of proline to tRNA(Pro) in a two-step reaction: proline is first activated by ATP to form Pro-AMP and then transferred to the acceptor end of tRNA(Pro). As ProRS can inadvertently accommodate and process non-cognate amino acids such as alanine and cysteine, to avoid such errors it has two additional distinct editing activities against alanine. One activity is designated as 'pretransfer' editing and involves the tRNA(Pro)-independent hydrolysis of activated Ala-AMP. The other activity is designated 'posttransfer' editing and involves deacylation of mischarged Ala-tRNA(Pro). The misacylated Cys-tRNA(Pro) is not edited by ProRS. In Wigglesworthia glossinidia brevipalpis, this protein is Proline--tRNA ligase.